The sequence spans 198 residues: Armadillo repeat-containing protein 7 (198 aa).

ARM repeat units follow at residues 57-99 (QVLD…QAGG) and 100-140 (LPLI…TSLP). Residue Ser-169 is modified to Phosphoserine.

As to quaternary structure, component of the minor spliceosome. Within this complex, interacts with RBM48.

Its function is as follows. As a component of the minor spliceosome, involved in the splicing of U12-type introns in pre-mRNAs. The sequence is that of Armadillo repeat-containing protein 7 (Armc7) from Mus musculus (Mouse).